The chain runs to 473 residues: Suppressor of SWI4 1 homolog (473 aa).

Positions 29-292 (PHSFVFTRGC…LIKVQEGVGE (264 aa)) constitute a Brix domain. Residues S238 and S240 each carry the phosphoserine modification. Positions 323–473 (AQRQAQQAQN…GRGRPRKRVA (151 aa)) are disordered. The span at 324-334 (QRQAQQAQNVQ) shows a compositional bias: low complexity. The segment covering 335 to 360 (RKQEQREAHRKKSLEGMKKARVRGGD) has biased composition (basic and acidic residues). Acidic residues predominate over residues 376-388 (GEDDDEQEDDDIE). The segment covering 407 to 421 (KRKRLAKSPGQKRKR) has biased composition (basic residues). The span at 422-444 (REMDRGRGRLCDQKFPKPKDKSH) shows a compositional bias: basic and acidic residues. The residue at position 438 (K438) is an N6-acetyllysine. The segment covering 464-473 (GRGRPRKRVA) has biased composition (basic residues).

Its subcellular location is the nucleus. The protein localises to the nucleolus. Functionally, may have a role in cell growth. This is Suppressor of SWI4 1 homolog (PPAN) from Pongo abelii (Sumatran orangutan).